Here is a 548-residue protein sequence, read N- to C-terminus: Natural resistance-associated macrophage protein 1 (548 aa).

Residues Met1–Gly12 are compositionally biased toward polar residues. The segment at Met1–Glu38 is disordered. Over Met1–Leu55 the chain is Cytoplasmic. A helical membrane pass occupies residues Trp56–Gly73. Topologically, residues Asn74 to Gly82 are extracellular. A helical membrane pass occupies residues Ala83 to Leu102. The Cytoplasmic portion of the chain corresponds to Cys103–Glu139. The chain crosses the membrane as a helical span at residues Leu140–Leu160. The Extracellular portion of the chain corresponds to Ser161 to Arg164. A helical membrane pass occupies residues Ile165–Leu184. The Cytoplasmic segment spans residues Asp185–Glu193. A helical transmembrane segment spans residues Ala194 to Ala214. Residues Arg215 to Glu237 are Extracellular-facing. Residues Leu238–Leu256 form a helical membrane-spanning segment. Residues His257 to Glu284 are Cytoplasmic-facing. The chain crosses the membrane as a helical span at residues Ala285–Gly304. The Extracellular portion of the chain corresponds to Gln305–Gly346. N-linked (GlcNAc...) asparagine glycans are attached at residues Asn321 and Asn335. A helical membrane pass occupies residues Val347–Leu366. Over Ala367 to Arg397 the chain is Cytoplasmic. The chain crosses the membrane as a helical span at residues Val398–Phe415. Residues Arg416–Asp426 lie on the Extracellular side of the membrane. Residues Leu427–Thr447 traverse the membrane as a helical segment. Over Ser448 to Lys463 the chain is Cytoplasmic. Residues Ile464–Val485 form a helical membrane-spanning segment. The Extracellular portion of the chain corresponds to Pro486–Tyr493. Residues Phe494–Trp513 traverse the membrane as a helical segment. The Cytoplasmic segment spans residues Thr514–Gly548.

Belongs to the NRAMP family.

It is found in the late endosome membrane. The protein resides in the lysosome membrane. The catalysed reaction is Zn(2+)(in) + H(+)(out) = Zn(2+)(out) + H(+)(in). It carries out the reaction Fe(2+)(in) + H(+)(out) = Fe(2+)(out) + H(+)(in). The enzyme catalyses Mn(2+)(in) + H(+)(out) = Mn(2+)(out) + H(+)(in). Its function is as follows. Macrophage-specific antiporter that fluxes metal ions in either direction against a proton gradient. Localized to late endosomal lysosomal membranes, delivers bivalent cations from the cytosol into these acidic compartments where they may directly affect antimicrobial activity. Involved in iron metabolism and host natural resistance to infection with intracellular parasites. Pathogen resistance involves sequestration of Fe(2+) and Mn(2+), cofactors of both prokaryotic and eukaryotic catalases and superoxide dismutases, not only to protect the macrophage against its own generation of reactive oxygen species, but to deny the cations to the pathogen for synthesis of its protective enzymes. This Ovis aries (Sheep) protein is Natural resistance-associated macrophage protein 1 (SLC11A1).